A 282-amino-acid polypeptide reads, in one-letter code: Rhomboid protease GlpG (282 aa).

Helical transmembrane passes span 96 to 116 (AGPL…WMQF), 144 to 164 (GLLH…WYLG), 176 to 196 (LFVI…LFSG), 197 to 217 (SHFG…WLTG), 225 to 242 (IGVP…LIVG), and 247 to 269 (FGLS…MALW). The active-site Nucleophile is the Ser203. His256 is a catalytic residue.

It belongs to the peptidase S54 family.

The protein resides in the cell inner membrane. It carries out the reaction Cleaves type-1 transmembrane domains using a catalytic dyad composed of serine and histidine that are contributed by different transmembrane domains.. Functionally, rhomboid-type serine protease that catalyzes intramembrane proteolysis. The protein is Rhomboid protease GlpG of Photorhabdus laumondii subsp. laumondii (strain DSM 15139 / CIP 105565 / TT01) (Photorhabdus luminescens subsp. laumondii).